The primary structure comprises 515 residues: 2-isopropylmalate synthase (515 aa).

The 263-residue stretch at valine 5–histidine 267 folds into the Pyruvate carboxyltransferase domain. Mn(2+) contacts are provided by aspartate 14, histidine 202, histidine 204, and asparagine 238. The interval valine 392–histidine 515 is regulatory domain.

It belongs to the alpha-IPM synthase/homocitrate synthase family. LeuA type 1 subfamily. In terms of assembly, homodimer. The cofactor is Mn(2+).

The protein localises to the cytoplasm. The catalysed reaction is 3-methyl-2-oxobutanoate + acetyl-CoA + H2O = (2S)-2-isopropylmalate + CoA + H(+). The protein operates within amino-acid biosynthesis; L-leucine biosynthesis; L-leucine from 3-methyl-2-oxobutanoate: step 1/4. Functionally, catalyzes the condensation of the acetyl group of acetyl-CoA with 3-methyl-2-oxobutanoate (2-ketoisovalerate) to form 3-carboxy-3-hydroxy-4-methylpentanoate (2-isopropylmalate). This chain is 2-isopropylmalate synthase, found in Haemophilus influenzae (strain ATCC 51907 / DSM 11121 / KW20 / Rd).